The chain runs to 240 residues: Biosynthetic peptidoglycan transglycosylase (240 aa).

A helical transmembrane segment spans residues Ala-12–Pro-31.

It belongs to the glycosyltransferase 51 family.

Its subcellular location is the cell inner membrane. The catalysed reaction is [GlcNAc-(1-&gt;4)-Mur2Ac(oyl-L-Ala-gamma-D-Glu-L-Lys-D-Ala-D-Ala)](n)-di-trans,octa-cis-undecaprenyl diphosphate + beta-D-GlcNAc-(1-&gt;4)-Mur2Ac(oyl-L-Ala-gamma-D-Glu-L-Lys-D-Ala-D-Ala)-di-trans,octa-cis-undecaprenyl diphosphate = [GlcNAc-(1-&gt;4)-Mur2Ac(oyl-L-Ala-gamma-D-Glu-L-Lys-D-Ala-D-Ala)](n+1)-di-trans,octa-cis-undecaprenyl diphosphate + di-trans,octa-cis-undecaprenyl diphosphate + H(+). It participates in cell wall biogenesis; peptidoglycan biosynthesis. Its function is as follows. Peptidoglycan polymerase that catalyzes glycan chain elongation from lipid-linked precursors. The protein is Biosynthetic peptidoglycan transglycosylase of Pseudomonas fluorescens (strain Pf0-1).